We begin with the raw amino-acid sequence, 1104 residues long: Isoleucine--tRNA ligase (1104 aa).

The 'HIGH' region motif lies at 48-58 (PYTTGRIHLGT). The 'KMSKS' region motif lies at 644–648 (KMSKS). Residue lysine 647 coordinates ATP.

This sequence belongs to the class-I aminoacyl-tRNA synthetase family. IleS type 2 subfamily. As to quaternary structure, monomer. Zn(2+) is required as a cofactor.

The protein resides in the cytoplasm. The enzyme catalyses tRNA(Ile) + L-isoleucine + ATP = L-isoleucyl-tRNA(Ile) + AMP + diphosphate. Catalyzes the attachment of isoleucine to tRNA(Ile). As IleRS can inadvertently accommodate and process structurally similar amino acids such as valine, to avoid such errors it has two additional distinct tRNA(Ile)-dependent editing activities. One activity is designated as 'pretransfer' editing and involves the hydrolysis of activated Val-AMP. The other activity is designated 'posttransfer' editing and involves deacylation of mischarged Val-tRNA(Ile). In Methanocella arvoryzae (strain DSM 22066 / NBRC 105507 / MRE50), this protein is Isoleucine--tRNA ligase.